Here is a 285-residue protein sequence, read N- to C-terminus: Inositol polyphosphate 1-phosphatase (285 aa).

Residues glutamate 68, aspartate 106, leucine 108, and aspartate 109 each contribute to the Mg(2+) site. 7 residues coordinate 1D-myo-inositol 1,4-bisphosphate: aspartate 109, glycine 110, threonine 111, serine 173, glycine 195, serine 197, and lysine 200. Aspartate 223 contributes to the Mg(2+) binding site.

This sequence belongs to the inositol monophosphatase superfamily. As to quaternary structure, monomer. The cofactor is Mg(2+).

The protein resides in the cytoplasm. It carries out the reaction 1D-myo-inositol 1,4-bisphosphate + H2O = 1D-myo-inositol 4-phosphate + phosphate. It catalyses the reaction adenosine 3',5'-bisphosphate + H2O = AMP + phosphate. Its activity is regulated as follows. Partially inhibited by Li(2+). Functionally, catalyzes the hydrolysis of the 1-position phosphate from inositol 1,4-bisphosphate. Is also able to convert 3'(2')-phosphoadenosine 5'-phosphate (PAP) to AMP but with less efficiency. The polypeptide is Inositol polyphosphate 1-phosphatase (Entamoeba histolytica (strain ATCC 30459 / HM-1:IMSS / ABRM)).